The chain runs to 291 residues: Verruculogen synthase (291 aa).

It belongs to the PhyH family. As to quaternary structure, homodimer. Requires Fe cation as cofactor.

It carries out the reaction fumitremorgin B + 2-oxoglutarate + AH2 + 2 O2 = verruculogen + succinate + A + CO2 + H2O. The protein operates within mycotoxin biosynthesis. Functionally, verruculogen synthase; part of the gene cluster that mediates the biosynthesis of fumitremorgins, indole alkaloids that carry not only intriguing chemical structures, but also interesting biological and pharmacological activities. The biosynthesis of fumitremorgin-type alkaloids begins by condensation of the two amino acids L-tryptophan and L-proline to brevianamide F, catalyzed by the non-ribosomal peptide synthetase ftmPS/ftmA. Brevianamide F is then prenylated by the prenyltransferase ftmPT1/ftmB in the presence of dimethylallyl diphosphate, resulting in the formation of tryprostatin B. The three cytochrome P450 monooxygenases, ftmP450-1/ftmC, ftmP450-2/ftmE and ftmP450-3/FtmG, are responsible for the conversion of tryprostatin B to 6-hydroxytryprostatin B, tryprostatin A to fumitremorgin C and fumitremorgin C to 12,13-dihydroxyfumitremorgin C, respectively. The putative methyltransferase ftmMT/ftmD is expected for the conversion of 6-hydroxytryprostatin B to tryprostatin A. FtmPT2/FtmH catalyzes the prenylation of 12,13-dihydroxyfumitre-morgin C in the presence of dimethylallyl diphosphate, resulting in the formation of fumitremorgin B. Fumitremorgin B is further converted to verruculogen by ftmOx1/ftmF via the insertion of an endoperoxide bond between the two prenyl moieties. Finally, verruculogen is further converted to fumitremorgin A by the verruculogen prenyltransferase ftmPT3. The protein is Verruculogen synthase of Neosartorya fischeri (strain ATCC 1020 / DSM 3700 / CBS 544.65 / FGSC A1164 / JCM 1740 / NRRL 181 / WB 181) (Aspergillus fischerianus).